The chain runs to 326 residues: DNA-directed RNA polymerase I subunit RPA43 (326 aa).

Positions 179 to 202 are disordered; that stretch reads VINTDENNGNNNNEDNKDSNGGSN. A compositionally biased stretch (low complexity) spans 182-202; the sequence is TDENNGNNNNEDNKDSNGGSN. 5 positions are modified to phosphoserine: serine 244, serine 251, serine 265, serine 269, and serine 285. The span at 288-304 shows a compositional bias: basic and acidic residues; it reads NKESHKELDLPEVKEDN. A disordered region spans residues 288 to 326; that stretch reads NKESHKELDLPEVKEDNGSEIVYEENTSESNDGESSDSD. Residues 309-326 are compositionally biased toward acidic residues; sequence VYEENTSESNDGESSDSD.

The protein belongs to the eukaryotic RPA43 RNA polymerase subunit family. In terms of assembly, component of the RNA polymerase I (Pol I) complex consisting of 14 subunits: RPA135, RPA190, RPC40, RPA14, RPB5, RPO26, RPA43, RPB8, RPA12, RPB10, RPC19, RPC10, RPA49 and RPA34. The complex is composed of a horseshoe-shaped core containing ten subunits (RPA135, RPA190, RPB5, RPO26, RPB8, RPB10, RPC10, RPA12, RPC19 and RPC40) where RPA135 and RPA190 form the DNA-binding cleft. Outside of the core, RPA14 and RPA43 form the stalk that mediates interactions with transcription initiation factors and newly synthesized RNA. Interacts with RPO26/ABC23 and with the initiation factor RRN3. In terms of processing, contains an average of four phosphates per molecule.

The protein localises to the nucleus. It localises to the nucleolus. Functionally, DNA-dependent RNA polymerases catalyze the transcription of DNA into RNA using the four ribonucleoside triphosphates as substrates. Component of RNA polymerase I (Pol I) which synthesizes ribosomal RNA precursors. Besides, RNA polymerase I has intrinsic RNA cleavage activity. Through its association with RRN3 is involved in recruitment of Pol I to rDNA promoters. In vitro, the A13-A43 subcomplex binds single-stranded RNA. This is DNA-directed RNA polymerase I subunit RPA43 (RPA43) from Saccharomyces cerevisiae (strain ATCC 204508 / S288c) (Baker's yeast).